The chain runs to 339 residues: Large ribosomal subunit protein uL11m (339 aa).

This sequence belongs to the universal ribosomal protein uL11 family.

Its subcellular location is the mitochondrion. This Acanthamoeba castellanii (Amoeba) protein is Large ribosomal subunit protein uL11m (RPL11).